The primary structure comprises 333 residues: 4-hydroxy-3-methylbut-2-enyl diphosphate reductase (333 aa).

Residue cysteine 20 coordinates [4Fe-4S] cluster. (2E)-4-hydroxy-3-methylbut-2-enyl diphosphate-binding residues include histidine 49 and histidine 85. Positions 49 and 85 each coordinate dimethylallyl diphosphate. Isopentenyl diphosphate-binding residues include histidine 49 and histidine 85. Cysteine 107 is a [4Fe-4S] cluster binding site. (2E)-4-hydroxy-3-methylbut-2-enyl diphosphate is bound at residue histidine 135. Position 135 (histidine 135) interacts with dimethylallyl diphosphate. Position 135 (histidine 135) interacts with isopentenyl diphosphate. Glutamate 137 (proton donor) is an active-site residue. Residue threonine 176 coordinates (2E)-4-hydroxy-3-methylbut-2-enyl diphosphate. Cysteine 206 contributes to the [4Fe-4S] cluster binding site. The (2E)-4-hydroxy-3-methylbut-2-enyl diphosphate site is built by serine 234, serine 235, asparagine 236, and serine 279. Dimethylallyl diphosphate-binding residues include serine 234, serine 235, asparagine 236, and serine 279. Isopentenyl diphosphate contacts are provided by serine 234, serine 235, asparagine 236, and serine 279.

This sequence belongs to the IspH family. [4Fe-4S] cluster serves as cofactor.

The catalysed reaction is isopentenyl diphosphate + 2 oxidized [2Fe-2S]-[ferredoxin] + H2O = (2E)-4-hydroxy-3-methylbut-2-enyl diphosphate + 2 reduced [2Fe-2S]-[ferredoxin] + 2 H(+). The enzyme catalyses dimethylallyl diphosphate + 2 oxidized [2Fe-2S]-[ferredoxin] + H2O = (2E)-4-hydroxy-3-methylbut-2-enyl diphosphate + 2 reduced [2Fe-2S]-[ferredoxin] + 2 H(+). The protein operates within isoprenoid biosynthesis; dimethylallyl diphosphate biosynthesis; dimethylallyl diphosphate from (2E)-4-hydroxy-3-methylbutenyl diphosphate: step 1/1. Its pathway is isoprenoid biosynthesis; isopentenyl diphosphate biosynthesis via DXP pathway; isopentenyl diphosphate from 1-deoxy-D-xylulose 5-phosphate: step 6/6. Catalyzes the conversion of 1-hydroxy-2-methyl-2-(E)-butenyl 4-diphosphate (HMBPP) into a mixture of isopentenyl diphosphate (IPP) and dimethylallyl diphosphate (DMAPP). Acts in the terminal step of the DOXP/MEP pathway for isoprenoid precursor biosynthesis. This chain is 4-hydroxy-3-methylbut-2-enyl diphosphate reductase, found in Rhizobium etli (strain CIAT 652).